A 247-amino-acid chain; its full sequence is Acidic 27 kDa endochitinase (247 aa).

Residues 1–16 (MVLCCVFLLFLTGSFA) form the signal peptide. Residue Glu84 is the Proton donor of the active site. The cysteines at positions 206 and 238 are disulfide-linked.

It belongs to the glycosyl hydrolase 19 family. Chitinase class II subfamily.

It is found in the secreted. Its subcellular location is the extracellular space. The catalysed reaction is Random endo-hydrolysis of N-acetyl-beta-D-glucosaminide (1-&gt;4)-beta-linkages in chitin and chitodextrins.. Its function is as follows. Defense against chitin-containing fungal pathogens. The chain is Acidic 27 kDa endochitinase (CHI17) from Solanum lycopersicum (Tomato).